The chain runs to 76 residues: UPF0235 protein MRA_1997 (76 aa).

The protein belongs to the UPF0235 family.

This is UPF0235 protein MRA_1997 from Mycobacterium tuberculosis (strain ATCC 25177 / H37Ra).